A 460-amino-acid chain; its full sequence is tRNA (guanine(10)-N(2))-methyltransferase TRMT11 (460 aa).

Alanine 2 is subject to N-acetylalanine.

It belongs to the class I-like SAM-binding methyltransferase superfamily. TRM11 methyltransferase family. Part of the heterodimeric TRMT11-TRM112 methyltransferase complex; this complex forms an active tRNA methyltransferase, where TRMT112 acts as an activator of the catalytic subunit TRMT11.

Its subcellular location is the cytoplasm. The catalysed reaction is guanosine(10) in tRNA + S-adenosyl-L-methionine = N(2)-methylguanosine(10) in tRNA + S-adenosyl-L-homocysteine + H(+). Functionally, catalytic subunit of the TRMT11-TRM112 methyltransferase complex, that specifically mediates the S-adenosyl-L-methionine-dependent N(2)-methylation of guanosine nucleotide at position 10 (m2G10) in tRNAs. This is one of the major tRNA (guanine-N(2))-methyltransferases. In Mus musculus (Mouse), this protein is tRNA (guanine(10)-N(2))-methyltransferase TRMT11.